Consider the following 814-residue polypeptide: Rap guanine nucleotide exchange factor 5 (814 aa).

The DEP domain occupies 43–118; it reads LQAADLVKDR…DNYVFYQFSS (76 aa). The region spanning 301 to 434 is the N-terminal Ras-GEF domain; that stretch reads ARYVVVSGTP…ELKEFQKILG (134 aa). Residues 578-813 enclose the Ras-GEF domain; it reads NTWDLALELM…FELSHRLEPR (236 aa).

The protein localises to the nucleus. In terms of biological role, guanine nucleotide exchange factor (GEF) for RAP1A, RAP2A and MRAS/M-Ras-GTP. Its association with MRAS inhibits Rap1 activation. The polypeptide is Rap guanine nucleotide exchange factor 5 (Rapgef5) (Mus musculus (Mouse)).